The sequence spans 256 residues: Probable cyclic nucleotide phosphodiesterase Fisuc_1441/FSU_1912 (256 aa).

7 residues coordinate Fe cation: Asp20, His22, Asp59, Asn89, His156, His196, and His198. AMP is bound by residues His22, Asp59, and 89–90 (NH). His198 lines the AMP pocket.

Belongs to the cyclic nucleotide phosphodiesterase class-III family. Fe(2+) is required as a cofactor.

The polypeptide is Probable cyclic nucleotide phosphodiesterase Fisuc_1441/FSU_1912 (Fibrobacter succinogenes (strain ATCC 19169 / S85)).